Reading from the N-terminus, the 581-residue chain is Probable hexosyltransferase MUCI70 (581 aa).

The Cytoplasmic portion of the chain corresponds to 1–58; the sequence is MTGLGVRSSSYGSLEKTGLNGVVLPIQITTTTRTKPSKMQKDREGIVHWICKFAGRKK. A helical; Signal-anchor for type II membrane protein transmembrane segment spans residues 59 to 79; that stretch reads VGMLLLFLISAVVFLRVLYVG. The Lumenal portion of the chain corresponds to 80-581; that stretch reads KGEDSQEGQG…NLPVRLPDSA (502 aa). Residues N96, N102, N119, N194, N224, N285, N382, N411, and N488 are each glycosylated (N-linked (GlcNAc...) asparagine). The disordered stretch occupies residues 514-581; it reads RFARQRPPVP…NLPVRLPDSA (68 aa). Positions 520–536 are enriched in pro residues; sequence PPVPNFPPPPPSPPPPV. The span at 553 to 571 shows a compositional bias: basic residues; sequence PPRRRGRDRRSGQRGHRKA.

Belongs to the glycosyltransferase 8 family. In terms of tissue distribution, expressed in siliques and seeds.

The protein localises to the golgi apparatus membrane. It functions in the pathway glycan metabolism; pectin biosynthesis. Probable glycosyltransferase involved in pectin and/or xylans biosynthesis in cell walls. Together with IRX14, required for xylan and pectin synthesis in seed coat epidermal (SCE) cells. Collaboratively with GAUT11, essential for the accumulation of seed mucilage, a gelatinous wall rich in unbranched rhamnogalacturonan I (RG I), and for shaping the surface morphology of seeds. The protein is Probable hexosyltransferase MUCI70 of Arabidopsis thaliana (Mouse-ear cress).